We begin with the raw amino-acid sequence, 197 residues long: Na(+)-translocating NADH-quinone reductase subunit E (197 aa).

6 helical membrane passes run Ser-11–Val-31, Val-35–Val-55, Phe-76–Phe-96, Leu-108–Met-128, Val-139–Ile-159, and Leu-175–Ile-195.

It belongs to the NqrDE/RnfAE family. Composed of six subunits; NqrA, NqrB, NqrC, NqrD, NqrE and NqrF.

The protein resides in the cell inner membrane. It catalyses the reaction a ubiquinone + n Na(+)(in) + NADH + H(+) = a ubiquinol + n Na(+)(out) + NAD(+). NQR complex catalyzes the reduction of ubiquinone-1 to ubiquinol by two successive reactions, coupled with the transport of Na(+) ions from the cytoplasm to the periplasm. NqrA to NqrE are probably involved in the second step, the conversion of ubisemiquinone to ubiquinol. The protein is Na(+)-translocating NADH-quinone reductase subunit E of Neisseria meningitidis serogroup C (strain 053442).